The primary structure comprises 87 residues: Cell division protein FtsL (87 aa).

Topologically, residues 1 to 6 (MNKSNF) are cytoplasmic. Residues 7-23 (FLLLAVCVSAFSVVMQQ) form a helical membrane-spanning segment. Over 24 to 87 (NQYRLNFTAL…GNTFMVEHQR (64 aa)) the chain is Periplasmic. Positions 31-71 (TALDKAKKQEIALEQDYAQMRLQQARLANHEAIRAAAEKQN) form a coiled coil. Positions 68 to 87 (EKQNLHPPVSGNTFMVEHQR) are disordered.

It belongs to the FtsL family. Part of a complex composed of FtsB, FtsL and FtsQ.

It is found in the cell inner membrane. Essential cell division protein. May link together the upstream cell division proteins, which are predominantly cytoplasmic, with the downstream cell division proteins, which are predominantly periplasmic. This Neisseria gonorrhoeae (strain ATCC 700825 / FA 1090) protein is Cell division protein FtsL.